Here is a 260-residue protein sequence, read N- to C-terminus: ATP synthase subunit a (260 aa).

A run of 7 helical transmembrane segments spans residues 30–50 (IAFT…IVFV), 96–116 (LFAF…LVGV), 125–145 (FTVT…VGFA), 151–171 (FFSL…IFPI), 187–207 (LFVA…FVIS), 213–233 (VGTF…ICAL), and 234–254 (ELLV…VYLN).

Belongs to the ATPase A chain family. In terms of assembly, F-type ATPases have 2 components, CF(1) - the catalytic core - and CF(0) - the membrane proton channel. CF(1) has five subunits: alpha(3), beta(3), gamma(1), delta(1), epsilon(1). CF(0) has three main subunits: a(1), b(2) and c(9-12). The alpha and beta chains form an alternating ring which encloses part of the gamma chain. CF(1) is attached to CF(0) by a central stalk formed by the gamma and epsilon chains, while a peripheral stalk is formed by the delta and b chains.

The protein localises to the cell inner membrane. In terms of biological role, key component of the proton channel; it plays a direct role in the translocation of protons across the membrane. The protein is ATP synthase subunit a of Novosphingobium aromaticivorans (strain ATCC 700278 / DSM 12444 / CCUG 56034 / CIP 105152 / NBRC 16084 / F199).